The following is a 130-amino-acid chain: Phosphoribosyl-AMP cyclohydrolase (130 aa).

Asp77 contributes to the Mg(2+) binding site. Cys78 provides a ligand contact to Zn(2+). Mg(2+)-binding residues include Asp79 and Asp81. 2 residues coordinate Zn(2+): Cys95 and Cys102.

Belongs to the PRA-CH family. In terms of assembly, homodimer. Mg(2+) is required as a cofactor. Requires Zn(2+) as cofactor.

It is found in the cytoplasm. The enzyme catalyses 1-(5-phospho-beta-D-ribosyl)-5'-AMP + H2O = 1-(5-phospho-beta-D-ribosyl)-5-[(5-phospho-beta-D-ribosylamino)methylideneamino]imidazole-4-carboxamide. Its pathway is amino-acid biosynthesis; L-histidine biosynthesis; L-histidine from 5-phospho-alpha-D-ribose 1-diphosphate: step 3/9. Catalyzes the hydrolysis of the adenine ring of phosphoribosyl-AMP. This Pseudomonas syringae pv. tomato (strain ATCC BAA-871 / DC3000) protein is Phosphoribosyl-AMP cyclohydrolase.